The sequence spans 429 residues: Probable M18 family aminopeptidase 2 (429 aa).

Zn(2+)-binding residues include histidine 82, histidine 156, and histidine 401.

It belongs to the peptidase M18 family. Requires Zn(2+) as cofactor.

The protein is Probable M18 family aminopeptidase 2 of Pseudomonas putida (strain ATCC 700007 / DSM 6899 / JCM 31910 / BCRC 17059 / LMG 24140 / F1).